The primary structure comprises 298 residues: NAD-dependent L-serine dehydrogenase (298 aa).

Residues 2–31 (KQIA…NVFD), 65–66 (LP), proline 66, and threonine 96 each bind NAD(+). Lysine 171 is a catalytic residue. An NAD(+)-binding site is contributed by lysine 246.

The protein belongs to the HIBADH-related family. In terms of assembly, homotetramer, dimer of dimers.

It carries out the reaction L-serine + NAD(+) = aminoacetaldehyde + CO2 + NADH. Its pathway is amino-acid degradation. In terms of biological role, NAD-dependent L-serine dehydrogenase that catalyzes the oxidation of L-serine and methyl-L-serine and is possibly involved in serine catabolism. Has low activity toward beta-hydroxyisobutyrate. The chain is NAD-dependent L-serine dehydrogenase from Pseudomonas aeruginosa (strain ATCC 15692 / DSM 22644 / CIP 104116 / JCM 14847 / LMG 12228 / 1C / PRS 101 / PAO1).